We begin with the raw amino-acid sequence, 431 residues long: Glutamate-1-semialdehyde 2,1-aminomutase (431 aa).

An N6-(pyridoxal phosphate)lysine modification is found at Lys-267.

This sequence belongs to the class-III pyridoxal-phosphate-dependent aminotransferase family. HemL subfamily. In terms of assembly, homodimer. Pyridoxal 5'-phosphate serves as cofactor.

Its subcellular location is the cytoplasm. The enzyme catalyses (S)-4-amino-5-oxopentanoate = 5-aminolevulinate. It participates in porphyrin-containing compound metabolism; protoporphyrin-IX biosynthesis; 5-aminolevulinate from L-glutamyl-tRNA(Glu): step 2/2. This Syntrophomonas wolfei subsp. wolfei (strain DSM 2245B / Goettingen) protein is Glutamate-1-semialdehyde 2,1-aminomutase.